Reading from the N-terminus, the 322-residue chain is Ribosome biogenesis protein RLP7 (322 aa).

Over residues 1–16 the composition is skewed to polar residues; the sequence is MSSTQDSKAQTLNSNP. Residues 1-52 form a disordered region; that stretch reads MSSTQDSKAQTLNSNPEILLRKRRNADRTRIERQELAKKKREEQIKKKRSNK. S2 bears the N-acetylserine mark. Residue S14 is modified to Phosphoserine. Residues 26 to 45 show a composition bias toward basic and acidic residues; sequence ADRTRIERQELAKKKREEQI. At T120 the chain carries Phosphothreonine. At S278 the chain carries Phosphoserine.

This sequence belongs to the universal ribosomal protein uL30 family.

The protein localises to the nucleus. Its subcellular location is the nucleolus. Its function is as follows. Involved in the biogenesis of the 60S ribosomal subunit. May act as a specificity factor that binds precursor rRNAs and tethers the enzymes that carry out the early 5' to 3' exonucleolytic reactions that generate the mature rRNAs. The polypeptide is Ribosome biogenesis protein RLP7 (RLP7) (Saccharomyces cerevisiae (strain ATCC 204508 / S288c) (Baker's yeast)).